The primary structure comprises 62 residues: U10-hottentoxin-Hj3a (62 aa).

The signal sequence occupies residues 1-22 (MQKLLIILILFCILKFNVDVEG). Cystine bridges form between cysteine 28–cysteine 46, cysteine 33–cysteine 59, and cysteine 37–cysteine 61.

The protein belongs to the short scorpion toxin superfamily. Potassium channel inhibitor family. Alpha-KTx 23 subfamily. In terms of tissue distribution, expressed by the venom gland.

It localises to the secreted. May block potassium channels. The chain is U10-hottentoxin-Hj3a from Hottentotta judaicus (Black scorpion).